Consider the following 280-residue polypeptide: Golgi to ER traffic protein 2 (280 aa).

3 stretches are compositionally biased toward basic and acidic residues: residues methionine 1–glutamine 17, serine 44–lysine 62, and alanine 71–lysine 80. Residues methionine 1 to lysine 80 are disordered. Residues methionine 1 to threonine 146 lie on the Cytoplasmic side of the membrane. Residues leucine 147–leucine 166 form a helical membrane-spanning segment. Topologically, residues threonine 167 to serine 191 are lumenal. The helical transmembrane segment at phenylalanine 192–serine 211 threads the bilayer. The Cytoplasmic portion of the chain corresponds to valine 212–asparagine 258. A helical membrane pass occupies residues isoleucine 259–glutamine 279. A topological domain (lumenal) is located at residue isoleucine 280.

This sequence belongs to the GET2 family. As to quaternary structure, component of the Golgi to ER traffic (GET) complex, which is composed of GET1, GET2 and GET3. Within the complex, GET1 and GET2 form a heterotetramer which is stabilized by phosphatidylinositol binding and which binds to the GET3 homodimer.

Its subcellular location is the endoplasmic reticulum membrane. It is found in the golgi apparatus membrane. In terms of biological role, required for the post-translational delivery of tail-anchored (TA) proteins to the endoplasmic reticulum. Together with GET1, acts as a membrane receptor for soluble GET3, which recognizes and selectively binds the transmembrane domain of TA proteins in the cytosol. The GET complex cooperates with the HDEL receptor ERD2 to mediate the ATP-dependent retrieval of resident ER proteins that contain a C-terminal H-D-E-L retention signal from the Golgi to the ER. In Candida glabrata (strain ATCC 2001 / BCRC 20586 / JCM 3761 / NBRC 0622 / NRRL Y-65 / CBS 138) (Yeast), this protein is Golgi to ER traffic protein 2.